Here is a 598-residue protein sequence, read N- to C-terminus: Nuclear receptor subfamily 4 group A member 2 (598 aa).

The tract at residues 1 to 22 is disordered; it reads MPCVQAQYGSSPQGASPASQGY. Polar residues predominate over residues 7–18; sequence QYGSSPQGASPA. Residues 260-335 constitute a DNA-binding region (nuclear receptor); the sequence is EGLCAVCGDN…VGMVKEVVRT (76 aa). 2 consecutive NR C4-type zinc fingers follow at residues 263-283 and 299-318; these read CAVC…CEGC and CLAN…CQYC. A Bipartite nuclear localization signal (NLS1) motif is present at residues 287-314; that stretch reads FKRTVQKNAKYVCLANKNCPVDKRRRNR. The disordered stretch occupies residues 337-361; that stretch reads SLKGRRGRLPSKPKSPQEPSPPSPP. The Nuclear localization signal (NLS1) signature appears at 338–350; it reads LKGRRGRLPSKPK. The segment covering 352-361 has biased composition (pro residues); sequence PQEPSPPSPP. The NR LBD domain maps to 360–595; the sequence is PPVSLISALV…AIIDKLFLDT (236 aa). The nuclear export sequence (NES1) signature appears at 443-452; it reads FLELFVLRLA. The nuclear export sequence (NES2) motif lies at 568–577; that stretch reads QGLQRIFYLK.

Belongs to the nuclear hormone receptor family. In terms of assembly, interacts with SFPQ, NCOR2, SIN3A and HADC1. The interaction with NCOR2 increases in the absence of PITX3. Interacts with PER2.

The protein resides in the cytoplasm. It localises to the nucleus. In terms of biological role, transcriptional regulator which is important for the differentiation and maintenance of meso-diencephalic dopaminergic (mdDA) neurons during development. It is crucial for expression of a set of genes such as SLC6A3, SLC18A2, TH and DRD2 which are essential for development of mdDA neurons. The chain is Nuclear receptor subfamily 4 group A member 2 (NR4A2) from Pongo abelii (Sumatran orangutan).